Reading from the N-terminus, the 231-residue chain is MAKISKRVAANKAKVERTKFYPIDEALSLVKECASAKFDESIDVAVQLGIDAKKSDQVVRGSVVLPAGTGKSVRVAVFAQGEKAEQAKAAGAEIVGMEDLAEQIKAGNMDFDVVIASPDTMRVVGTLGQILGPRGLMPNPKVGTVTPDVATAVKNAKAGQVQFRVDKAGIIHATIGRRSFEPAALKSNLAALLDALSKAKPASSKGVYLRKIAVSSTMGVGVRIDQATLSA.

Belongs to the universal ribosomal protein uL1 family. In terms of assembly, part of the 50S ribosomal subunit.

Its function is as follows. Binds directly to 23S rRNA. The L1 stalk is quite mobile in the ribosome, and is involved in E site tRNA release. In terms of biological role, protein L1 is also a translational repressor protein, it controls the translation of the L11 operon by binding to its mRNA. The sequence is that of Large ribosomal subunit protein uL1 from Ralstonia nicotianae (strain ATCC BAA-1114 / GMI1000) (Ralstonia solanacearum).